The following is a 152-amino-acid chain: Small ribosomal subunit protein uS11 (152 aa).

The segment at 133 to 152 (VTPIPTDSTRRKSGHRGRRL) is disordered. The span at 143–152 (RKSGHRGRRL) shows a compositional bias: basic residues.

Belongs to the universal ribosomal protein uS11 family. As to quaternary structure, component of the small ribosomal subunit. Part of the small subunit (SSU) processome, composed of more than 70 proteins and the RNA chaperone small nucleolar RNA (snoRNA) U3.

It localises to the cytoplasm. The protein localises to the nucleus. It is found in the nucleolus. Component of the small ribosomal subunit. The ribosome is a large ribonucleoprotein complex responsible for the synthesis of proteins in the cell. Part of the small subunit (SSU) processome, first precursor of the small eukaryotic ribosomal subunit. During the assembly of the SSU processome in the nucleolus, many ribosome biogenesis factors, an RNA chaperone and ribosomal proteins associate with the nascent pre-rRNA and work in concert to generate RNA folding, modifications, rearrangements and cleavage as well as targeted degradation of pre-ribosomal RNA by the RNA exosome. This Dictyostelium discoideum (Social amoeba) protein is Small ribosomal subunit protein uS11 (rps14).